The chain runs to 446 residues: D(3) dopamine receptor (446 aa).

Topologically, residues 1-32 are extracellular; the sequence is MAPLSQISSHINSTCGAENSTGVNRARPHAYY. N12 and N19 each carry an N-linked (GlcNAc...) asparagine glycan. The chain crosses the membrane as a helical span at residues 33 to 55; the sequence is ALSYCALILAIIFGNGLVCAAVL. Residues 56–65 are Cytoplasmic-facing; sequence RERALQTTTN. A helical transmembrane segment spans residues 66–88; sequence YLVVSLAVADLLVATLVMPWVVY. The Extracellular segment spans residues 89–104; that stretch reads LEVTGGVWNFSRICCD. N97 carries an N-linked (GlcNAc...) asparagine glycan. The cysteines at positions 103 and 181 are disulfide-linked. The chain crosses the membrane as a helical span at residues 105–126; that stretch reads VFVTLDVMMCTASILNLCAISI. Topologically, residues 127 to 149 are cytoplasmic; it reads DRYTAVVMPVHYQHGTGQSSCRR. Residues 150 to 170 traverse the membrane as a helical segment; it reads VALMITAVWVLAFAVSCPLLF. Residues 171–187 lie on the Extracellular side of the membrane; that stretch reads GFNTTGDPSICSISNPD. Residue N173 is glycosylated (N-linked (GlcNAc...) asparagine). Residues 188–209 form a helical membrane-spanning segment; that stretch reads FVIYSSVVSFYVPFGVTVLVYA. Over 210–375 the chain is Cytoplasmic; it reads RIYMVLRQRR…VPLREKKATQ (166 aa). Residues 376 to 397 form a helical membrane-spanning segment; that stretch reads MVVIVLGAFIVCWLPFFLTHVL. At 398 to 412 the chain is on the extracellular side; the sequence is NTHCQACHVSPELYR. C401 and C404 are joined by a disulfide. The helical transmembrane segment at 413 to 432 threads the bilayer; the sequence is ATTWLGYVNSALNPVIYTTF. Topologically, residues 433-446 are cytoplasmic; it reads NIEFRKAFLKILSC.

It belongs to the G-protein coupled receptor 1 family. As to quaternary structure, interacts with CLIC6. Interacts with GRK4. Interacts with PALM. Interacts with FLNA (via filamin repeat 21); increases PKA-mediated phosphorylation of FLNA. Post-translationally, phosphorylated by GRK4. Palmitoylated.

It is found in the cell membrane. In terms of biological role, dopamine receptor whose activity is mediated by G proteins which inhibit adenylyl cyclase. Promotes cell proliferation. The chain is D(3) dopamine receptor (Drd3) from Mus musculus (Mouse).